Reading from the N-terminus, the 477-residue chain is Protoporphyrinogen oxidase (477 aa).

FAD contacts are provided by residues 9-14, 34-35, W42, 57-60, V257, A449, and 454-456; these read GGGISG, ES, GPRG, and VAV.

It belongs to the protoporphyrinogen/coproporphyrinogen oxidase family. Protoporphyrinogen oxidase subfamily. In terms of assembly, monomer. Homodimer. Requires FAD as cofactor. As to expression, expressed in heart, brain, placenta, lung, liver, skeletal muscle, kidney and pancreas.

The protein localises to the mitochondrion inner membrane. The catalysed reaction is protoporphyrinogen IX + 3 O2 = protoporphyrin IX + 3 H2O2. It participates in porphyrin-containing compound metabolism; protoporphyrin-IX biosynthesis; protoporphyrin-IX from protoporphyrinogen-IX: step 1/1. Its function is as follows. Catalyzes the 6-electron oxidation of protoporphyrinogen-IX to form protoporphyrin-IX. This chain is Protoporphyrinogen oxidase (PPOX), found in Homo sapiens (Human).